Consider the following 494-residue polypeptide: Tripartite motif-containing protein 5 (494 aa).

N-acetylalanine is present on alanine 2. Residues 15-59 (CPICLELLTEPLSLDCGHSFCQACITANHKESMLHQGERSCPLCR) form an RING-type zinc finger. The segment at 91 to 132 (QNVDHCARHGEKLLLFCEQDGNIICWLCERSQEHRGHNTFLV) adopts a B box-type zinc-finger fold. Zn(2+) is bound by residues cysteine 96, histidine 99, cysteine 118, and histidine 124. Positions 132–223 (VEEVAQKYRE…RLVQSENDMV (92 aa)) form a coiled coil. The interval 186–199 (FKQLRDILDCEESN) is required for interaction with GABARAP and for autophagy. The B30.2/SPRY domain maps to 280-494 (PDLKRMLQVL…LPMTLCSPRS (215 aa)).

The protein belongs to the TRIM/RBCC family. As to quaternary structure, can form homodimers and homotrimers. In addition to lower-order dimerization, also exhibits a higher-order multimerization and both low- and high-order multimerizations are essential for its restriction activity. Interacts with BTBD1 and BTBD2. Interacts with PSMC4, PSMC5, PSMD7 and HSPA8/HSC70. Interacts (via B30.2/SPRY domain) with HSPA1A/B. Interacts with PSMC2, MAP3K7/TAK1, TAB2 and TAB3. Interacts with SQSTM1. Interacts with TRIM6 and TRIM34. Interacts with ULK1 (phosphorylated form), GABARAP, GABARAPL1, GABARAPL2, MAP1LC3A, MAP1LC3C and BECN1. Degraded in a proteasome-independent fashion in the absence of viral infection but in a proteasome-dependent fashion following exposure to restriction sensitive virus. Post-translationally, autoubiquitinated in a RING finger- and UBE2D2-dependent manner. Monoubiquitinated by TRIM21. Deubiquitinated by Yersinia YopJ. Ubiquitination may not lead to proteasomal degradation.

The protein localises to the cytoplasm. Its subcellular location is the nucleus. It carries out the reaction S-ubiquitinyl-[E2 ubiquitin-conjugating enzyme]-L-cysteine + [acceptor protein]-L-lysine = [E2 ubiquitin-conjugating enzyme]-L-cysteine + N(6)-ubiquitinyl-[acceptor protein]-L-lysine.. The protein operates within protein modification; protein ubiquitination. Functionally, capsid-specific restriction factor that prevents infection from non-host-adapted retroviruses. Blocks viral replication early in the life cycle, after viral entry but before reverse transcription. In addition to acting as a capsid-specific restriction factor, also acts as a pattern recognition receptor that activates innate immune signaling in response to the retroviral capsid lattice. Binding to the viral capsid triggers its E3 ubiquitin ligase activity, and in concert with the heterodimeric ubiquitin conjugating enzyme complex UBE2V1-UBE2N (also known as UBC13-UEV1A complex) generates 'Lys-63'-linked polyubiquitin chains, which in turn are catalysts in the autophosphorylation of the MAP3K7/TAK1 complex (includes TAK1, TAB2, and TAB3). Activation of the MAP3K7/TAK1 complex by autophosphorylation results in the induction and expression of NF-kappa-B and MAPK-responsive inflammatory genes, thereby leading to an innate immune response in the infected cell. Restricts infection by simian immunodeficiency virus (SIV-mac). Plays a role in regulating autophagy through activation of autophagy regulator BECN1 by causing its dissociation from its inhibitors BCL2 and TAB2. The chain is Tripartite motif-containing protein 5 (TRIM5) from Saimiri sciureus (Common squirrel monkey).